Consider the following 368-residue polypeptide: 3-dehydroquinate synthase (368 aa).

NAD(+)-binding positions include 112-116 (GVIGD), 136-137 (TT), K149, and K158. Zn(2+)-binding residues include E191, H256, and H273.

This sequence belongs to the sugar phosphate cyclases superfamily. Dehydroquinate synthase family. It depends on Co(2+) as a cofactor. Zn(2+) is required as a cofactor. The cofactor is NAD(+).

The protein resides in the cytoplasm. It carries out the reaction 7-phospho-2-dehydro-3-deoxy-D-arabino-heptonate = 3-dehydroquinate + phosphate. Its pathway is metabolic intermediate biosynthesis; chorismate biosynthesis; chorismate from D-erythrose 4-phosphate and phosphoenolpyruvate: step 2/7. Catalyzes the conversion of 3-deoxy-D-arabino-heptulosonate 7-phosphate (DAHP) to dehydroquinate (DHQ). The sequence is that of 3-dehydroquinate synthase from Prochlorococcus marinus (strain NATL1A).